A 199-amino-acid chain; its full sequence is Dephospho-CoA kinase (199 aa).

The DPCK domain maps to 2–199 (KIAVTGGYSS…FVADRIEKKK (198 aa)). 10–15 (SSGKSS) contributes to the ATP binding site.

It belongs to the CoaE family.

It is found in the cytoplasm. It carries out the reaction 3'-dephospho-CoA + ATP = ADP + CoA + H(+). Its pathway is cofactor biosynthesis; coenzyme A biosynthesis; CoA from (R)-pantothenate: step 5/5. Its function is as follows. Catalyzes the phosphorylation of the 3'-hydroxyl group of dephosphocoenzyme A to form coenzyme A. The protein is Dephospho-CoA kinase of Desulfotalea psychrophila (strain LSv54 / DSM 12343).